Consider the following 237-residue polypeptide: 6-carboxyhexanoate--CoA ligase (237 aa).

This sequence belongs to the BioW family. In terms of assembly, homodimer. Mg(2+) is required as a cofactor.

The enzyme catalyses heptanedioate + ATP + CoA = 6-carboxyhexanoyl-CoA + AMP + diphosphate. It functions in the pathway metabolic intermediate metabolism; pimeloyl-CoA biosynthesis; pimeloyl-CoA from pimelate: step 1/1. Its function is as follows. Catalyzes the transformation of pimelate into pimeloyl-CoA with concomitant hydrolysis of ATP to AMP. This is 6-carboxyhexanoate--CoA ligase from Methanocaldococcus jannaschii (strain ATCC 43067 / DSM 2661 / JAL-1 / JCM 10045 / NBRC 100440) (Methanococcus jannaschii).